The primary structure comprises 630 residues: Plastin-3 (630 aa).

EF-hand domains follow at residues 12 to 47 (DELD…ANMP) and 52 to 87 (KVRE…VKSS). Aspartate 25, asparagine 27, asparagine 29, glutamate 36, aspartate 65, asparagine 67, aspartate 69, lysine 71, and glutamate 76 together coordinate Ca(2+). Actin-binding stretches follow at residues 109–382 (TSEL…ALTK) and 383–627 (PENQ…GRGM). Calponin-homology (CH) domains lie at 123-239 (EEEK…KIGL) and 267-378 (LSPE…NKYP). A phosphoserine mark is found at serine 268, serine 293, serine 326, and serine 339. The residue at position 391 (threonine 391) is a Phosphothreonine. Calponin-homology (CH) domains are found at residues 397–506 (TREE…RRYT) and 518–627 (KAND…GRGM).

Monomer.

Its subcellular location is the cytoplasm. Functionally, actin-bundling protein. In Bos taurus (Bovine), this protein is Plastin-3 (PLS3).